A 179-amino-acid polypeptide reads, in one-letter code: Large ribosomal subunit protein uL6 (179 aa).

This sequence belongs to the universal ribosomal protein uL6 family. In terms of assembly, part of the 50S ribosomal subunit.

Functionally, this protein binds to the 23S rRNA, and is important in its secondary structure. It is located near the subunit interface in the base of the L7/L12 stalk, and near the tRNA binding site of the peptidyltransferase center. This is Large ribosomal subunit protein uL6 from Prochlorococcus marinus (strain NATL2A).